The chain runs to 788 residues: Protein HID1 (788 aa).

Residue Gly-2 is the site of N-myristoyl glycine attachment. Positions 297–313 (ATSTSPTVDGTTTGTAM) are enriched in low complexity. Disordered regions lie at residues 297–316 (ATST…MDDA) and 571–680 (PPSI…QWSP). Composition is skewed to polar residues over residues 590 to 600 (RTGSQEGTSME) and 643 to 680 (PESQ…QWSP). Phosphoserine occurs at positions 653 and 670.

It belongs to the hid-1 family.

Its subcellular location is the cytoplasm. It localises to the golgi apparatus membrane. In Mus musculus (Mouse), this protein is Protein HID1 (Hid1).